The primary structure comprises 746 residues: MQAKKRYFILLSAGSCLALLFYFGGLQFRASRSHSRREEHSGRNGLHHPSPDHFWPRFPDALRPFVPWDQLENEDSSVHISPRQKRDANSSIYKGKKCRMESCFDFTLCKKNGFKVYAYPQQKGEKIAESYQNILAAIEGSRFYTSDPSQACLFVLSLDTLDRDQLSPQYVHNLRSKVQSLHLWNNGRNHLIFNLYSGTWPDYTEDVGFDIGQAMLAKASISTENFRPNFDVSIPLFSKDHPRTGGERGFLKFNTIPPLRKYMLVFKGKRYLTGIGSDTRNALYHVHNGEDVVLLTTCKHGKDWQKHKDSRCDRDNTEYEKYDYREMLHNATFCLVPRGRRLGSFRFLEALQAACVPVMLSNGWELPFSEVINWNQAAVIGDERLLLQIPSTIRSIHQDKILALRQQTQFLWEAYFSSVEKIVLTTLEIIQDRIFKHISRNSLIWNKHPGGLFVLPQYSSYLGDFPYYYANLGLKPPSKFTAVIHAVTPLVSQSQPVLKLLVAAAKSQYCAQIIVLWNCDKPLPAKHRWPATAVPVIVIEGESKVMSSRFLPYDNIITDAVLSLDEDTVLSTTEVDFAFTVWRSFPERIVGYPARSHFWDNSKERWGYTSKWTNDYSMVLTGAAIYHKYYHYLYSHYLPASLKNMVDQLANCEDILMNFLVSAVTKLPPIKVTQKEQYKETMMGQTSRASRWADPDHFAQRQSCMNTFASWFGYMPLIHSQMRLDPVLFKDQVSILRKKYRDIERL.

At 1–7 (MQAKKRY) the chain is on the cytoplasmic side. A helical; Signal-anchor for type II membrane protein membrane pass occupies residues 8 to 28 (FILLSAGSCLALLFYFGGLQF). Residues 29–746 (RASRSHSRRE…RKKYRDIERL (718 aa)) are Lumenal-facing. The N-linked (GlcNAc...) asparagine glycan is linked to Asn89. Disulfide bonds link Cys98–Cys103 and Cys109–Cys152. The a protein site is built by Leu166 and Tyr203. UDP is bound by residues Lys267, Lys269, Tyr271, and Arg280. An intrachain disulfide couples Cys298 to Cys312. Residue His300 participates in a protein binding. The UDP site is built by Tyr319 and Tyr324. Asn330 is a glycosylation site (N-linked (GlcNAc...) asparagine). 2 cysteine pairs are disulfide-bonded: Cys334–Cys355 and Cys652–Cys704. The UDP site is built by Arg346 and Glu349.

Belongs to the glycosyltransferase 47 family. As to quaternary structure, part of the heparan sulfate polymerase, a dimeric complex composed of EXT1 and EXT2. Could also form homooligomeric complexes. Interacts with NDST1. In terms of processing, N-glycosylated.

It is found in the golgi apparatus membrane. Its subcellular location is the golgi apparatus. The protein localises to the cis-Golgi network membrane. It localises to the endoplasmic reticulum membrane. It catalyses the reaction 3-O-{alpha-D-GlcNAc-[(1-&gt;4)-beta-D-GlcA-(1-&gt;4)-alpha-D-GlcNAc](n)-(1-&gt;4)-beta-D-GlcA-(1-&gt;3)-beta-D-Gal-(1-&gt;3)-beta-D-Gal-(1-&gt;4)-beta-D-Xyl}-L-seryl-[protein] + UDP-alpha-D-glucuronate = 3-O-{[(1-&gt;4)-beta-D-GlcA-(1-&gt;4)-alpha-D-GlcNAc](n+1)-(1-&gt;4)-beta-D-GlcA-(1-&gt;3)-beta-D-Gal-(1-&gt;3)-beta-D-Gal-(1-&gt;4)-beta-D-Xyl}-L-seryl-[protein] + UDP + H(+). It participates in protein modification; protein glycosylation. Functionally, glycosyltransferase forming with EXT2 the heterodimeric heparan sulfate polymerase which catalyzes the elongation of the heparan sulfate glycan backbone. Glycan backbone extension consists in the alternating transfer of (1-&gt;4)-beta-D-GlcA and (1-&gt;4)-alpha-D-GlcNAc residues from their respective UDP-sugar donors. Both EXT1 and EXT2 are required for the full activity of the polymerase since EXT1 bears the N-acetylglucosaminyl-proteoglycan 4-beta-glucuronosyltransferase activity within the complex while EXT2 carries the glucuronosyl-N-acetylglucosaminyl-proteoglycan 4-alpha-N-acetylglucosaminyltransferase activity. Heparan sulfate proteoglycans are ubiquitous components of the extracellular matrix and play an important role in tissue homeostasis and signaling. This is Exostosin-1 (EXT1) from Pongo abelii (Sumatran orangutan).